We begin with the raw amino-acid sequence, 352 residues long: Endophilin-A1 (352 aa).

The tract at residues 1-21 is membrane-binding amphipathic helix; it reads MSVAGLKKQFHKATQKVSEKV. The interval 1–27 is disordered; sequence MSVAGLKKQFHKATQKVSEKVGGAEGT. The segment at 1–125 is binds and tubulates liposomes; it reads MSVAGLKKQF…EVGEAMRELS (125 aa). One can recognise a BAR domain in the interval 18-249; the sequence is SEKVGGAEGT…LEERIRQASS (232 aa). Positions 60-87 are required for dimerization upon membrane association; sequence PNPASRAKLSMINTMSKIRGQEKGPGYP. A coiled-coil region spans residues 181–248; it reads EELRQALEKF…RLEERIRQAS (68 aa). S262 is subject to Phosphoserine. A disordered region spans residues 264–289; it reads EFATGDSTQPNGGLSHTGTPKPPGVQ. Polar residues predominate over residues 268-281; that stretch reads GDSTQPNGGLSHTG. The SH3 domain occupies 290-349; sequence MDQPCCRALYDFEPENEGELGFKEGDIITLTNQIDENWYEGMLHGQSGFFPINYVEILVA. Phosphotyrosine is present on Y299.

This sequence belongs to the endophilin family. Monomer; in cytoplasm. Homodimer; when associated with membranes. Interacts with SYNJ1. Interacts with DNM1. Interacts with MAP4K3; the interaction appears to regulate MAP4K3-mediated JNK activation. Interacts with OPHN1. Interacts with PDCD6IP. Interacts with BIN2. Interacts with ATXN2. Interacts with ADAM9 and ADAM15 cytoplasmic tails. Interacts with TMEM108. Interacts with ADGRB2.

It localises to the cytoplasm. It is found in the membrane. Its subcellular location is the early endosome. The protein resides in the presynapse. Implicated in synaptic vesicle endocytosis. May recruit other proteins to membranes with high curvature. Required for BDNF-dependent dendrite outgrowth. Cooperates with SH3GL2 to mediate BDNF-NTRK2 early endocytic trafficking and signaling from early endosomes. The chain is Endophilin-A1 (Sh3gl2) from Mus musculus (Mouse).